The chain runs to 351 residues: Translation initiation factor eIF2B subunit beta (351 aa).

The protein belongs to the eIF-2B alpha/beta/delta subunits family. As to quaternary structure, component of the translation initiation factor 2B (eIF2B) complex which is a heterodecamer of two sets of five different subunits: alpha, beta, gamma, delta and epsilon. Subunits alpha, beta and delta comprise a regulatory subcomplex and subunits epsilon and gamma comprise a catalytic subcomplex. Within the complex, the hexameric regulatory complex resides at the center, with the two heterodimeric catalytic subcomplexes bound on opposite sides.

It localises to the cytoplasm. Its subcellular location is the cytosol. Its activity is regulated as follows. Activated by the chemical integrated stress response (ISR) inhibitor ISRIB which stimulates guanine nucleotide exchange factor activity for both phosphorylated and unphosphorylated eIF2. Its function is as follows. Acts as a component of the translation initiation factor 2B (eIF2B) complex, which catalyzes the exchange of GDP for GTP on eukaryotic initiation factor 2 (eIF2) gamma subunit. Its guanine nucleotide exchange factor activity is repressed when bound to eIF2 complex phosphorylated on the alpha subunit, thereby limiting the amount of methionyl-initiator methionine tRNA available to the ribosome and consequently global translation is repressed. This chain is Translation initiation factor eIF2B subunit beta (EIF2B2), found in Bos taurus (Bovine).